The sequence spans 100 residues: Integration host factor subunit alpha (100 aa).

Belongs to the bacterial histone-like protein family. In terms of assembly, heterodimer of an alpha and a beta chain.

In terms of biological role, this protein is one of the two subunits of integration host factor, a specific DNA-binding protein that functions in genetic recombination as well as in transcriptional and translational control. This Buchnera aphidicola subsp. Schizaphis graminum (strain Sg) protein is Integration host factor subunit alpha.